Reading from the N-terminus, the 88-residue chain is Small ribosomal subunit protein uS15c (88 aa).

This sequence belongs to the universal ribosomal protein uS15 family. In terms of assembly, part of the 30S ribosomal subunit.

It is found in the plastid. The protein resides in the chloroplast. This Barbarea verna (Land cress) protein is Small ribosomal subunit protein uS15c (rps15).